We begin with the raw amino-acid sequence, 122 residues long: Large ribosomal subunit protein uL14 (122 aa).

It belongs to the universal ribosomal protein uL14 family. As to quaternary structure, part of the 50S ribosomal subunit. Forms a cluster with proteins L3 and L19. In the 70S ribosome, L14 and L19 interact and together make contacts with the 16S rRNA in bridges B5 and B8.

In terms of biological role, binds to 23S rRNA. Forms part of two intersubunit bridges in the 70S ribosome. The chain is Large ribosomal subunit protein uL14 from Rickettsia africae (strain ESF-5).